The sequence spans 395 residues: 1-deoxy-D-xylulose 5-phosphate reductoisomerase (395 aa).

Residues Thr-10, Gly-11, Ser-12, Ile-13, and Asn-123 each contribute to the NADPH site. Lys-124 lines the 1-deoxy-D-xylulose 5-phosphate pocket. NADPH is bound at residue Glu-125. Residue Asp-149 participates in Mn(2+) binding. 1-deoxy-D-xylulose 5-phosphate contacts are provided by Ser-150, Glu-151, Ser-185, and His-208. Glu-151 provides a ligand contact to Mn(2+). Gly-214 contributes to the NADPH binding site. 4 residues coordinate 1-deoxy-D-xylulose 5-phosphate: Ser-221, Asn-226, Lys-227, and Glu-230. Glu-230 is a binding site for Mn(2+).

This sequence belongs to the DXR family. The cofactor is Mg(2+). Requires Mn(2+) as cofactor.

The catalysed reaction is 2-C-methyl-D-erythritol 4-phosphate + NADP(+) = 1-deoxy-D-xylulose 5-phosphate + NADPH + H(+). Its pathway is isoprenoid biosynthesis; isopentenyl diphosphate biosynthesis via DXP pathway; isopentenyl diphosphate from 1-deoxy-D-xylulose 5-phosphate: step 1/6. Catalyzes the NADPH-dependent rearrangement and reduction of 1-deoxy-D-xylulose-5-phosphate (DXP) to 2-C-methyl-D-erythritol 4-phosphate (MEP). The protein is 1-deoxy-D-xylulose 5-phosphate reductoisomerase of Shewanella sediminis (strain HAW-EB3).